The primary structure comprises 540 residues: Chaperonin GroEL (540 aa).

Residues 30-33 (TLAP), Lys-51, 87-91 (DGTTT), Gly-415, 479-481 (NAA), and Asp-495 each bind ATP.

Belongs to the chaperonin (HSP60) family. In terms of assembly, forms a cylinder of 14 subunits composed of two heptameric rings stacked back-to-back. Interacts with the co-chaperonin GroES.

It is found in the cytoplasm. It carries out the reaction ATP + H2O + a folded polypeptide = ADP + phosphate + an unfolded polypeptide.. Functionally, together with its co-chaperonin GroES, plays an essential role in assisting protein folding. The GroEL-GroES system forms a nano-cage that allows encapsulation of the non-native substrate proteins and provides a physical environment optimized to promote and accelerate protein folding. The sequence is that of Chaperonin GroEL from Methylovorus sp. (strain SS1 / DSM 11726).